A 487-amino-acid chain; its full sequence is MVPVIALVGRPNVGKSTMFNRLTKTRDAIVGDLSGLTRDRQYGDASWQGRSFILIDTGGITGDEVGMDEKMAEQSLMAIEEADYVLFLVDARAGMTAADQMIAEHLRKRNKSAILVANKIDNIDADVARAEFSPLGMGNAIPVAGSQGRGINQLMESVLGHIPRDAEEEALDQEVAEGEEAVRIPGPSEKDGIKIAIIGRPNVGKSTLVNRMLGEERVVVYDQPGTTRDSIYIPFERDNEKYTFIDTAGVRKRGKIHEEVEKFSVVKTLQAIKDANVVIFVMDAREGVVDHDLNLLGFALEAGRAIVIALNKWDGMESGERDYVKTELERRLFFVDFADIHFISALHGTGVGHLYKSVQAAFKSAVTRWPTSRLTQILEDAVSEHQPPLVNGRRIKLRYAHLGGANPPLIVIHGNQTEKIPKSYSRYLENTYRRVLKLVGTPIRIEYKGGENPYEGKKNTLTDRQVNKKRRLMSHHKKAEKKRRDKR.

2 consecutive EngA-type G domains span residues 3–166 (PVIA…PRDA) and 193–366 (IKIA…KSAV). Residues 9–16 (GRPNVGKS), 56–60 (DTGGI), 118–121 (NKID), 199–206 (GRPNVGKS), 246–250 (DTAGV), and 311–314 (NKWD) each bind GTP. Positions 367 to 451 (TRWPTSRLTQ…PIRIEYKGGE (85 aa)) constitute a KH-like domain. A compositionally biased stretch (basic and acidic residues) spans 448 to 461 (KGGENPYEGKKNTL). Residues 448-487 (KGGENPYEGKKNTLTDRQVNKKRRLMSHHKKAEKKRRDKR) form a disordered region. Basic residues predominate over residues 467–487 (NKKRRLMSHHKKAEKKRRDKR).

Belongs to the TRAFAC class TrmE-Era-EngA-EngB-Septin-like GTPase superfamily. EngA (Der) GTPase family. In terms of assembly, associates with the 50S ribosomal subunit.

In terms of biological role, GTPase that plays an essential role in the late steps of ribosome biogenesis. The protein is GTPase Der of Pseudomonas putida (strain W619).